Here is a 114-residue protein sequence, read N- to C-terminus: T cell receptor beta variable 5-6 (114 aa).

Positions 1–21 (MGPGLLCWALLCLLGAGLVDA) are cleaved as a signal peptide. The Ig-like domain maps to 22 to 114 (GVTQSPTHLI…SALYLCASSL (93 aa)). A disulfide bridge links cysteine 42 with cysteine 110. Asparagine 90 is a glycosylation site (N-linked (GlcNAc...) asparagine).

Alpha-beta TR is a heterodimer composed of an alpha and beta chain; disulfide-linked. The alpha-beta TR is associated with the transmembrane signaling CD3 coreceptor proteins to form the TR-CD3 (TcR or TCR). The assembly of alpha-beta TR heterodimers with CD3 occurs in the endoplasmic reticulum where a single alpha-beta TR heterodimer associates with one CD3D-CD3E heterodimer, one CD3G-CD3E heterodimer and one CD247 homodimer forming a stable octameric structure. CD3D-CD3E and CD3G-CD3E heterodimers preferentially associate with TR alpha and TR beta chains, respectively. The association of the CD247 homodimer is the last step of TcR assembly in the endoplasmic reticulum and is required for transport to the cell surface.

The protein resides in the cell membrane. In terms of biological role, v region of the variable domain of T cell receptor (TR) beta chain that participates in the antigen recognition. Alpha-beta T cell receptors are antigen specific receptors which are essential to the immune response and are present on the cell surface of T lymphocytes. Recognize peptide-major histocompatibility (MH) (pMH) complexes that are displayed by antigen presenting cells (APC), a prerequisite for efficient T cell adaptive immunity against pathogens. Binding of alpha-beta TR to pMH complex initiates TR-CD3 clustering on the cell surface and intracellular activation of LCK that phosphorylates the ITAM motifs of CD3G, CD3D, CD3E and CD247 enabling the recruitment of ZAP70. In turn ZAP70 phosphorylates LAT, which recruits numerous signaling molecules to form the LAT signalosome. The LAT signalosome propagates signal branching to three major signaling pathways, the calcium, the mitogen-activated protein kinase (MAPK) kinase and the nuclear factor NF-kappa-B (NF-kB) pathways, leading to the mobilization of transcription factors that are critical for gene expression and essential for T cell growth and differentiation. The T cell repertoire is generated in the thymus, by V-(D)-J rearrangement. This repertoire is then shaped by intrathymic selection events to generate a peripheral T cell pool of self-MH restricted, non-autoaggressive T cells. Post-thymic interaction of alpha-beta TR with the pMH complexes shapes TR structural and functional avidity. The polypeptide is T cell receptor beta variable 5-6 (Homo sapiens (Human)).